Consider the following 373-residue polypeptide: Aminomethyltransferase (373 aa).

Belongs to the GcvT family. The glycine cleavage system is composed of four proteins: P, T, L and H.

It catalyses the reaction N(6)-[(R)-S(8)-aminomethyldihydrolipoyl]-L-lysyl-[protein] + (6S)-5,6,7,8-tetrahydrofolate = N(6)-[(R)-dihydrolipoyl]-L-lysyl-[protein] + (6R)-5,10-methylene-5,6,7,8-tetrahydrofolate + NH4(+). Its function is as follows. The glycine cleavage system catalyzes the degradation of glycine. The chain is Aminomethyltransferase from Prochlorococcus marinus (strain SARG / CCMP1375 / SS120).